Consider the following 67-residue polypeptide: Large ribosomal subunit protein bL35 (67 aa).

Belongs to the bacterial ribosomal protein bL35 family.

The polypeptide is Large ribosomal subunit protein bL35 (Bartonella quintana (strain Toulouse) (Rochalimaea quintana)).